The primary structure comprises 565 residues: Cytokinin dehydrogenase 2 (565 aa).

Positions 1-20 (MKQEQVRMAVLLMLNCFVKA) are cleaved as a signal peptide. N64 is a glycosylation site (N-linked (GlcNAc...) asparagine). Residues 74 to 255 (RLAAAAAVLY…TRARIPLAPA (182 aa)) enclose the FAD-binding PCMH-type domain. Residues A108, G110, and G112 each contribute to the FAD site. Pros-8alpha-FAD histidine is present on H113. FAD contacts are provided by S114, Q118, D179, T184, S190, I194, and I245. N464 is a glycosylation site (N-linked (GlcNAc...) asparagine). FAD-binding residues include Y517, S554, and Q557.

The protein belongs to the oxygen-dependent FAD-linked oxidoreductase family. As to quaternary structure, monomer. The cofactor is FAD. Glycosylated. As to expression, mostly expressed in leaves, culms, inflorescence meristems, and flowers, especially in vascular tissues.

Its subcellular location is the secreted. It is found in the extracellular space. It catalyses the reaction N(6)-dimethylallyladenine + A + H2O = 3-methyl-2-butenal + adenine + AH2. Its function is as follows. Catalyzes the oxidation of cytokinins, a family of N(6)-substituted adenine derivatives that are plant hormones, where the substituent is an isopentenyl group. Is a major QTL involved in grain yield. Modulates the number of reproductive organs by regulating the cytokinin accumulation in inflorescence meristems. Acts as negative regulator of panicle branching. The sequence is that of Cytokinin dehydrogenase 2 from Oryza sativa subsp. japonica (Rice).